The following is a 1115-amino-acid chain: Disheveled-associated activator of morphogenesis 2 (1115 aa).

The 377-residue stretch at 40–416 (GPIPNPEELN…QIVLQDERGV (377 aa)) folds into the GBD/FH3 domain. A coiled-coil region spans residues 434–515 (MLINENEVKQ…ELVARHNESS (82 aa)). Disordered regions lie at residues 510-605 (RHNE…SHPL) and 655-697 (QEGP…SATG). One can recognise an FH1 domain in the interval 518 to 694 (PVSSPPPPGG…TEKASRSMVS (177 aa)). Over residues 540–583 (LPPPPPPLPFDSCPPPPAPPLPPGGPPIPPGAPPCFSSGPPPSH) the composition is skewed to pro residues. In terms of domain architecture, FH2 spans 595 to 1042 (KKRIPQPSHP…DERRARMEFM (448 aa)). Residues 1065-1095 (EESGEFDDLVSALRSGEVFDKDLSKFKRNRK) form the DAD domain.

This sequence belongs to the formin homology family. As to quaternary structure, interacts with DVL3. Interacts with INF2. As to expression, in early embryogenesis, expression is confined to embryonic ectoderm. Highly dynamic expression in later stages of gastrulation. In early somite stages, detected in posterior node and persists until 9-10 somites have developed when expression is concentrated in the chordoneural hinge. During organogenesis, expressed in the CNS, PNS, liver primordia, limb buds and genital tubercle.

In terms of biological role, key regulator of the Wnt signaling pathway, which is required for various processes during development, such as dorsal patterning, determination of left/right symmetry or myelination in the central nervous system. Acts downstream of Wnt ligands and upstream of beta-catenin (CTNNB1). Required for canonical Wnt signaling pathway during patterning in the dorsal spinal cord by promoting the aggregation of Disheveled (Dvl) complexes, thereby clustering and formation of Wnt receptor signalosomes and potentiating Wnt activity. During dorsal patterning of the spinal cord, inhibits oligodendrocytes differentiation via interaction with PIP5K1A. Also regulates non-canonical Wnt signaling pathway. Acts downstream of PITX2 in the developing gut and is required for left/right asymmetry within dorsal mesentery: affects mesenchymal condensation by lengthening cadherin-based junctions through WNT5A and non-canonical Wnt signaling, inducing polarized condensation in the left dorsal mesentery necessary to initiate gut rotation. Together with DAAM1, required for myocardial maturation and sarcomere assembly. Is a regulator of actin nucleation and elongation, filopodia formation and podocyte migration. This is Disheveled-associated activator of morphogenesis 2 from Mus musculus (Mouse).